A 387-amino-acid chain; its full sequence is Succinate--CoA ligase [ADP-forming] subunit beta (387 aa).

One can recognise an ATP-grasp domain in the interval 9–236 (KELFAKHNVP…RAATDPLELK (228 aa)). Residues Lys45, 52–54 (GRG), Ser94, and Glu99 each bind ATP. Mg(2+) is bound by residues Asn191 and Asp205. Substrate is bound by residues Asn256 and 318–320 (GIT).

Belongs to the succinate/malate CoA ligase beta subunit family. Heterotetramer of two alpha and two beta subunits. Mg(2+) is required as a cofactor.

It carries out the reaction succinate + ATP + CoA = succinyl-CoA + ADP + phosphate. It catalyses the reaction GTP + succinate + CoA = succinyl-CoA + GDP + phosphate. Its pathway is carbohydrate metabolism; tricarboxylic acid cycle; succinate from succinyl-CoA (ligase route): step 1/1. Functionally, succinyl-CoA synthetase functions in the citric acid cycle (TCA), coupling the hydrolysis of succinyl-CoA to the synthesis of either ATP or GTP and thus represents the only step of substrate-level phosphorylation in the TCA. The beta subunit provides nucleotide specificity of the enzyme and binds the substrate succinate, while the binding sites for coenzyme A and phosphate are found in the alpha subunit. This Mycobacterium tuberculosis (strain CDC 1551 / Oshkosh) protein is Succinate--CoA ligase [ADP-forming] subunit beta.